A 438-amino-acid polypeptide reads, in one-letter code: 5-methylthioadenosine/S-adenosylhomocysteine deaminase (438 aa).

Positions 66 and 68 each coordinate Zn(2+). Residues Glu95, Arg148, and His188 each coordinate substrate. His215 serves as a coordination point for Zn(2+). Substrate-binding residues include Glu218 and Asp305. Residue Asp305 coordinates Zn(2+).

This sequence belongs to the metallo-dependent hydrolases superfamily. MTA/SAH deaminase family. Zn(2+) serves as cofactor.

It carries out the reaction S-adenosyl-L-homocysteine + H2O + H(+) = S-inosyl-L-homocysteine + NH4(+). The catalysed reaction is S-methyl-5'-thioadenosine + H2O + H(+) = S-methyl-5'-thioinosine + NH4(+). Functionally, catalyzes the deamination of 5-methylthioadenosine and S-adenosyl-L-homocysteine into 5-methylthioinosine and S-inosyl-L-homocysteine, respectively. Is also able to deaminate adenosine. This is 5-methylthioadenosine/S-adenosylhomocysteine deaminase from Halalkalibacterium halodurans (strain ATCC BAA-125 / DSM 18197 / FERM 7344 / JCM 9153 / C-125) (Bacillus halodurans).